We begin with the raw amino-acid sequence, 196 residues long: Rac-like GTP-binding protein RAC9 (196 aa).

13–20 (GDGAVGKT) contributes to the GTP binding site. The short motif at 35–43 (YVPTVFDNF) is the Effector region element. GTP is bound by residues 60–64 (DTAGQ) and 118–121 (TKLD). Residue cysteine 193 is modified to Cysteine methyl ester. A lipid anchor (S-geranylgeranyl cysteine) is attached at cysteine 193. Residues 194 to 196 (AFL) constitute a propeptide, removed in mature form.

The protein belongs to the small GTPase superfamily. Rho family.

The protein resides in the cytoplasm. The protein localises to the membrane. In terms of biological role, inactive GDP-bound Rho GTPases reside in the cytosol, are found in a complex with Rho GDP-dissociation inhibitors (Rho GDIs), and are released from the GDI protein in order to translocate to membranes upon activation. The sequence is that of Rac-like GTP-binding protein RAC9 (RAC9) from Gossypium hirsutum (Upland cotton).